Consider the following 631-residue polypeptide: Phosphomethylpyrimidine synthase (631 aa).

Substrate-binding positions include Asn239, Met268, Tyr297, His333, 353–355 (SRG), 394–397 (DGLR), and Glu433. His437 is a binding site for Zn(2+). A substrate-binding site is contributed by Tyr460. Zn(2+) is bound at residue His501. Residues Cys581, Cys584, and Cys589 each coordinate [4Fe-4S] cluster.

This sequence belongs to the ThiC family. As to quaternary structure, homodimer. [4Fe-4S] cluster serves as cofactor.

The catalysed reaction is 5-amino-1-(5-phospho-beta-D-ribosyl)imidazole + S-adenosyl-L-methionine = 4-amino-2-methyl-5-(phosphooxymethyl)pyrimidine + CO + 5'-deoxyadenosine + formate + L-methionine + 3 H(+). It functions in the pathway cofactor biosynthesis; thiamine diphosphate biosynthesis. Catalyzes the synthesis of the hydroxymethylpyrimidine phosphate (HMP-P) moiety of thiamine from aminoimidazole ribotide (AIR) in a radical S-adenosyl-L-methionine (SAM)-dependent reaction. This Shigella flexneri serotype 5b (strain 8401) protein is Phosphomethylpyrimidine synthase.